A 724-amino-acid chain; its full sequence is Solute carrier organic anion transporter family member 4C1 (724 aa).

Over Met1–Gly105 the chain is Cytoplasmic. Ser15, Ser16, Ser24, Ser26, and Ser28 each carry phosphoserine. The disordered stretch occupies residues Ser24–Ser71. Residues Ala25 to Asp38 show a composition bias toward polar residues. Residues Ser44–Glu60 show a composition bias toward low complexity. A helical membrane pass occupies residues Gly106 to Val126. Topologically, residues Asn127–Gly145 are extracellular. A helical transmembrane segment spans residues Leu146–Gly166. The Cytoplasmic portion of the chain corresponds to Glu167–Pro172. Residues Arg173–Gly197 traverse the membrane as a helical segment. The Extracellular segment spans residues Glu198 to Ser224. The chain crosses the membrane as a helical span at residues Leu225–Leu254. Topologically, residues Asp255 to Ser274 are cytoplasmic. The helical transmembrane segment at Ile275–Val295 threads the bilayer. Residues Ala296–Leu311 are Extracellular-facing. The chain crosses the membrane as a helical span at residues Gly312–Pro336. The Cytoplasmic segment spans residues Lys337–Asn377. A helical membrane pass occupies residues Leu378–Thr399. Topologically, residues Gly400–Phe419 are extracellular. Residues Ala420–Val443 form a helical membrane-spanning segment. At Ser444–Lys447 the chain is on the cytoplasmic side. The chain crosses the membrane as a helical span at residues Met448 to Phe471. Over Ile472–Phe580 the chain is Extracellular. Positions Gly495–Glu549 constitute a Kazal-like domain. Cystine bridges form between Cys501/Cys530, Cys507/Cys526, and Cys516/Cys547. A helical transmembrane segment spans residues Leu581 to Leu603. The Cytoplasmic portion of the chain corresponds to Arg604–Ser612. Residues Leu613–Ile638 form a helical membrane-spanning segment. Residues Asp639 to Ser672 are Extracellular-facing. The helical transmembrane segment at Val673–Tyr690 threads the bilayer. At Lys691–Gly724 the chain is on the cytoplasmic side.

This sequence belongs to the organo anion transporter (TC 2.A.60) family.

It is found in the basolateral cell membrane. It catalyses the reaction estrone 3-sulfate(out) = estrone 3-sulfate(in). It carries out the reaction L-thyroxine(out) = L-thyroxine(in). The catalysed reaction is 3,3',5-triiodo-L-thyronine(out) = 3,3',5-triiodo-L-thyronine(in). The enzyme catalyses chenodeoxycholate(out) = chenodeoxycholate(in). It catalyses the reaction glycocholate(out) = glycocholate(in). It carries out the reaction L-homoarginine(in) = L-homoarginine(out). The catalysed reaction is L-arginine(in) = L-arginine(out). The enzyme catalyses N(omega),N(omega)-dimethyl-L-arginine(out) = N(omega),N(omega)-dimethyl-L-arginine(in). Its function is as follows. Mediates the transport of organic anions such as steroids (estrone 3-sulfate, chenodeoxycholate, glycocholate) and thyroid hormones (3,3',5-triiodo-L-thyronine (T3), L-thyroxine (T4)), in the kidney. Capable of transporting cAMP and pharmacological substances such as digoxin, ouabain and methotrexate. Transport is independent of sodium, chloride ion, and ATP. Transport activity is stimulated by an acidic extracellular environment due to increased substrate affinity to the transporter. The driving force for this transport activity is currently not known. The role of hydrogencarbonate (HCO3(-), bicarbonate) as the probable counteranion that exchanges for organic anions is still not well defined. Functions as an uptake transporter at the apical membrane, suggesting a role in renal reabsorption. Involved in the renal secretion of the uremic toxin ADMA (N(omega),N(omega)-dimethyl-L-arginine or asymmetrical dimethylarginine), which is associated to cardiovascular events and mortality, and the structurally related amino acids L-arginine and L-homoarginine (a cardioprotective biomarker). Can act bidirectionally, suggesting a dual protective role of this transport protein; exporting L-homoarginine after being synthesized in proximal tubule cells, and mediating uptake of ADMA from the blood into proximal tubule cells where it is degraded by the enzyme dimethylarginine dimethylaminohydrolase 1 (DDAH1). May be involved in sperm maturation by enabling directed movement of organic anions and compounds within or between cells. This ion-transporting process is important to maintain the strict epididymal homeostasis necessary for sperm maturation. May have a role in secretory functions since seminal vesicle epithelial cells are assumed to secrete proteins involved in decapacitation by modifying surface proteins to facilitate the acquisition of the ability to fertilize the egg. The chain is Solute carrier organic anion transporter family member 4C1 from Pongo abelii (Sumatran orangutan).